The sequence spans 836 residues: Transcription factor vrtR2 (836 aa).

Residues 1 to 26 (MPSLSSKTSTMQRSCRPQMSACPNQQ) are compositionally biased toward polar residues. The tract at residues 1–29 (MPSLSSKTSTMQRSCRPQMSACPNQQQKD) is disordered. Residues 37–63 (CVLCRDRKLKCDKLDPCSNCTSSGVAC) constitute a DNA-binding region (zn(2)-C6 fungal-type). Residues 72-114 (PRGRHARTVQTKASTPPDTRRRGSSNESTTAPAPDDGGLGTHI) are disordered. Polar residues predominate over residues 79 to 88 (TVQTKASTPP).

The protein localises to the nucleus. Its function is as follows. Probable transcription factor that regulates expression of the gene cluster that mediates the biosynthesis of viridicatumtoxin, a tetracycline-like fungal meroterpenoid with a unique, fused spirobicyclic ring system. This chain is Transcription factor vrtR2, found in Penicillium aethiopicum.